The chain runs to 426 residues: 4-aminobutyrate aminotransferase GabT (426 aa).

Pyridoxal 5'-phosphate contacts are provided by residues 111 to 112 and glutamine 242; that span reads GS. Lysine 268 is modified (N6-(pyridoxal phosphate)lysine). A pyridoxal 5'-phosphate-binding site is contributed by threonine 297.

Belongs to the class-III pyridoxal-phosphate-dependent aminotransferase family. In terms of assembly, homotetramer. Pyridoxal 5'-phosphate is required as a cofactor.

It catalyses the reaction 4-aminobutanoate + 2-oxoglutarate = succinate semialdehyde + L-glutamate. The catalysed reaction is 5-aminopentanoate + 2-oxoglutarate = 5-oxopentanoate + L-glutamate. It functions in the pathway amino-acid degradation; 4-aminobutanoate degradation. The protein operates within amino-acid degradation. Functionally, pyridoxal phosphate-dependent enzyme that catalyzes transamination between primary amines and alpha-keto acids. Catalyzes the transfer of the amino group from gamma-aminobutyrate (GABA) to alpha-ketoglutarate (KG) to yield succinic semialdehyde (SSA) and glutamate. Thereby functions in a GABA degradation pathway that allows some E.coli strains to utilize GABA as a nitrogen source for growth. Also catalyzes the conversion of 5-aminovalerate to glutarate semialdehyde, as part of a L-lysine degradation pathway that proceeds via cadaverine, glutarate and L-2-hydroxyglutarate. The protein is 4-aminobutyrate aminotransferase GabT (gabT) of Escherichia coli (strain K12).